The primary structure comprises 202 residues: Imidazoleglycerol-phosphate dehydratase (202 aa).

This sequence belongs to the imidazoleglycerol-phosphate dehydratase family.

The protein resides in the cytoplasm. The catalysed reaction is D-erythro-1-(imidazol-4-yl)glycerol 3-phosphate = 3-(imidazol-4-yl)-2-oxopropyl phosphate + H2O. Its pathway is amino-acid biosynthesis; L-histidine biosynthesis; L-histidine from 5-phospho-alpha-D-ribose 1-diphosphate: step 6/9. This is Imidazoleglycerol-phosphate dehydratase from Acinetobacter baylyi (strain ATCC 33305 / BD413 / ADP1).